The primary structure comprises 204 residues: Ubiquitin-conjugating enzyme E2 S (204 aa).

In terms of domain architecture, UBC core spans 14-160 (QIIKQVAREI…AKMFTEIHAK (147 aa)). The active-site Glycyl thioester intermediate is cysteine 98. Positions 165–176 (SSNNISEGQQES) are enriched in polar residues. The interval 165-204 (SSNNISEGQQESLPGKKRVAVNEKMCDKKKKDKKRALKRL) is disordered. The span at 191–204 (DKKKKDKKRALKRL) shows a compositional bias: basic residues.

Belongs to the ubiquitin-conjugating enzyme family.

The enzyme catalyses S-ubiquitinyl-[E1 ubiquitin-activating enzyme]-L-cysteine + [E2 ubiquitin-conjugating enzyme]-L-cysteine = [E1 ubiquitin-activating enzyme]-L-cysteine + S-ubiquitinyl-[E2 ubiquitin-conjugating enzyme]-L-cysteine.. Its pathway is protein modification; protein ubiquitination. Functionally, catalyzes the covalent attachment of ubiquitin to other proteins. Acts as an essential factor of the anaphase promoting complex/cyclosome (APC/C), a cell cycle-regulated ubiquitin ligase that controls progression through mitosis. Acts by specifically elongating polyubiquitin chains initiated by the E2 enzyme UBCH10 on APC/C substrates, enhancing the degradation of APC/C substrates by the proteasome and promoting mitotic exit. The protein is Ubiquitin-conjugating enzyme E2 S of Nematostella vectensis (Starlet sea anemone).